Here is a 219-residue protein sequence, read N- to C-terminus: Guanylate kinase (219 aa).

In terms of domain architecture, Guanylate kinase-like spans 15-194 (GLMFVLSSPS…AFESVKAILR (180 aa)). 22–29 (SPSGAGKT) is a binding site for ATP.

It belongs to the guanylate kinase family.

Its subcellular location is the cytoplasm. It catalyses the reaction GMP + ATP = GDP + ADP. Its function is as follows. Essential for recycling GMP and indirectly, cGMP. The sequence is that of Guanylate kinase from Rhodopseudomonas palustris (strain BisB5).